Reading from the N-terminus, the 1096-residue chain is Constitutive coactivator of PPAR-gamma-like protein 2 (1096 aa).

The segment covering 35–59 (QQQHLHRQLPPTAALAPGAPRAARG) has biased composition (low complexity). Disordered stretches follow at residues 35 to 113 (QQQH…PPQL), 508 to 579 (NYLP…DGEP), and 971 to 1096 (SRSS…RKED). Residue Arg-58 is modified to Omega-N-methylarginine. A compositionally biased stretch (basic residues) spans 82-95 (TRHHHPAHHFHHHG). The segment covering 101 to 113 (LHPPLPPPPPPQL) has biased composition (pro residues). Residues 540–559 (HITEAFHHQPEWGNPNRDRG) show a composition bias toward basic and acidic residues. Arg-977 is subject to Omega-N-methylarginine. Composition is skewed to basic and acidic residues over residues 1041–1050 (IKEEKSDHRL) and 1076–1096 (NREK…RKED). Lys-1042 participates in a covalent cross-link: Glycyl lysine isopeptide (Lys-Gly) (interchain with G-Cter in SUMO2).

Belongs to the constitutive coactivator of PPAR-gamma family. In terms of tissue distribution, expressed at low levels in a number of tissues.

The sequence is that of Constitutive coactivator of PPAR-gamma-like protein 2 (FAM120C) from Homo sapiens (Human).